Here is a 628-residue protein sequence, read N- to C-terminus: Probable potassium transport system protein Kup 1 (628 aa).

12 consecutive transmembrane segments (helical) span residues 18–38 (ITLAALGVVYGDLGTSPLYAL), 58–78 (IVSLFFWTIMIVVSFKYVLLV), 106–126 (ALLMLLGLVGVGLFIGDAVIT), 141–161 (ITPELAPFVLPITLTVLVILF), 175–195 (FGPIMLLWFGVLAALGAYEIV), 219–239 (IAFITLGAVVLCVTGTEALYA), 253–273 (WGSLVMPALLLNYFGQGALLL), 285–305 (LLAPSWLAFPLLILATLATVI), 343–363 (IYLPLVNWLLLGGIIIVIIWF), 371–391 (AAYGIAVTGTMALTTLLLMVV), 401–421 (WLIALICAPLLLVDVTFFAAN), and 425–445 (FLAGGWLPILFALLAIIVMTT).

The protein belongs to the HAK/KUP transporter (TC 2.A.72) family.

The protein localises to the cell inner membrane. The catalysed reaction is K(+)(in) + H(+)(in) = K(+)(out) + H(+)(out). In terms of biological role, transport of potassium into the cell. Likely operates as a K(+):H(+) symporter. In Aeromonas hydrophila subsp. hydrophila (strain ATCC 7966 / DSM 30187 / BCRC 13018 / CCUG 14551 / JCM 1027 / KCTC 2358 / NCIMB 9240 / NCTC 8049), this protein is Probable potassium transport system protein Kup 1.